The chain runs to 278 residues: Large ribosomal subunit protein uL2 (278 aa).

Disordered stretches follow at residues 28–58 and 223–278; these read TPEK…GGGH and GVVM…KNKR. Residues 43 to 53 are compositionally biased toward polar residues; the sequence is RNNQGRITTRH. Basic residues predominate over residues 268 to 278; it reads IRRRKTGKNKR.

It belongs to the universal ribosomal protein uL2 family. As to quaternary structure, part of the 50S ribosomal subunit. Forms a bridge to the 30S subunit in the 70S ribosome.

One of the primary rRNA binding proteins. Required for association of the 30S and 50S subunits to form the 70S ribosome, for tRNA binding and peptide bond formation. It has been suggested to have peptidyltransferase activity; this is somewhat controversial. Makes several contacts with the 16S rRNA in the 70S ribosome. In Nocardioides sp. (strain ATCC BAA-499 / JS614), this protein is Large ribosomal subunit protein uL2.